Here is a 555-residue protein sequence, read N- to C-terminus: Potassium-transporting ATPase potassium-binding subunit (555 aa).

Transmembrane regions (helical) follow at residues 2–22, 60–80, 130–150, 173–193, 246–266, 278–298, 374–394, 412–432, 483–503, and 525–545; these read IWVA…PTGI, QYAL…YFIF, IGIT…VMAF, VFLP…VPQT, MSNI…PFTY, ILFV…TTSE, AGFV…GLMV, LIAV…ALAL, LVMF…AASL, and GIFI…MLVL.

Belongs to the KdpA family. In terms of assembly, the system is composed of three essential subunits: KdpA, KdpB and KdpC.

The protein resides in the cell membrane. Its function is as follows. Part of the high-affinity ATP-driven potassium transport (or Kdp) system, which catalyzes the hydrolysis of ATP coupled with the electrogenic transport of potassium into the cytoplasm. This subunit binds the extracellular potassium ions and delivers the ions to the membrane domain of KdpB through an intramembrane tunnel. This Bacillus cereus (strain Q1) protein is Potassium-transporting ATPase potassium-binding subunit.